A 989-amino-acid chain; its full sequence is Autotransporter adhesin/invasin TibA (989 aa).

An N-terminal signal peptide occupies residues 1–54 (MNKVYNTVWNESTGTWVVTSELTRKGGLRPRQIKRTVLAGLIAGLLMPSMPALA). Residues serine 74, serine 86, serine 93, serine 94, serine 97, serine 100, serine 112, serine 113, serine 116, serine 119, serine 124, serine 131, serine 132, and serine 135 are each glycosylated (O-alpha-linked (D-glycero-D-manno-heptose) serine). A run of 12 repeats spans residues 82-100 (TTIN…SATS), 101-119 (TTIN…SATS), 120-138 (STIN…SATN), 139-157 (TTVN…SAMG), 158-176 (TIIN…SATS), 177-195 (ASVT…IVKA), 196-214 (TSVN…SATD), 215-233 (TVLN…SAAK), 234-251 (TTIN…SATG), 252-270 (TSIY…SATN), 271-289 (TTVY…NVTE), and 290-308 (TTIT…SASK). Residues 82–308 (TTINSGGKQY…QVEAGGSASK (227 aa)) are 12 X 19 AA approximate repeats. Positions 110 to 123 (HVSSGGSATSSTIN) are enriched in polar residues. The interval 110 to 146 (HVSSGGSATSSTINSGGHQHVSSGGSATNTTVNNGGR) is disordered. The segment covering 124–135 (SGGHQHVSSGGS) has biased composition (low complexity). Residues 136-146 (ATNTTVNNGGR) are compositionally biased toward polar residues. 21 O-alpha-linked (D-glycero-D-manno-heptose) serine glycosylation sites follow: serine 151, serine 154, serine 162, serine 170, serine 176, serine 181, serine 188, serine 189, serine 200, serine 226, serine 227, serine 230, serine 238, serine 248, serine 263, serine 264, serine 275, serine 294, serine 305, serine 313, and serine 322. The disordered stretch occupies residues 623–686 (WYLKADTPPP…GTSSSPVRRT (64 aa)). The segment covering 629–638 (TPPPVTPPTN) has biased composition (pro residues). 8 tandem repeats follow at residues 639–643 (PDADN), 644–648 (PDAGN), 649–653 (PDAGN), 654–658 (PDAGN), 659–663 (PDAGN), 664–668 (PDAGK), 669–673 (PGTGK), and 674–678 (PDAGT). The span at 639–667 (PDADNPDAGNPDAGNPDAGNPDAGNPDAG) shows a compositional bias: low complexity. The 8 X 5 AA repeats of P-[DG]-[AGT]-[DGA]-[NKT] stretch occupies residues 639–678 (PDADNPDAGNPDAGNPDAGNPDAGNPDAGKPGTGKPDAGT). Positions 721–989 (NTRAPGGVWG…TGGVGFRINF (269 aa)) constitute an Autotransporter domain.

Homohexamer. Post-translationally, glycosylated by TibC. Glycosylation is required for adhesion to and invasion of host cells. Glycosylation is dispensable for bacterial autoaggregation and biofilm formation.

Its subcellular location is the cell outer membrane. Functionally, mediates both adhesion to and invasion of human intestine epithelial cells. Also mediates bacterial cell aggregation via intercellular TibA-TibA interaction. Enhances biofilm formation. The chain is Autotransporter adhesin/invasin TibA from Escherichia coli O78:H11 (strain H10407 / ETEC).